The sequence spans 644 residues: Exoribonuclease 2 (644 aa).

Positions 189–516 (REDLTALDFV…NHRLLKAVIK (328 aa)) constitute an RNB domain. Positions 561-643 (DTRFAAEIVD…ETRSIIARPV (83 aa)) constitute an S1 motif domain.

This sequence belongs to the RNR ribonuclease family. RNase II subfamily.

It is found in the cytoplasm. It catalyses the reaction Exonucleolytic cleavage in the 3'- to 5'-direction to yield nucleoside 5'-phosphates.. In terms of biological role, involved in mRNA degradation. Hydrolyzes single-stranded polyribonucleotides processively in the 3' to 5' direction. The sequence is that of Exoribonuclease 2 from Escherichia coli O127:H6 (strain E2348/69 / EPEC).